Consider the following 635-residue polypeptide: Threonine--tRNA ligase (635 aa).

Residues 1-61 (MITVRLPDGS…EKDSDLAIIT (61 aa)) form the TGS domain. Residues 242–533 (DHRKLGKQLD…LIEHYAGALP (292 aa)) are catalytic. Residues Cys333, His384, and His510 each contribute to the Zn(2+) site.

Belongs to the class-II aminoacyl-tRNA synthetase family. As to quaternary structure, homodimer. Requires Zn(2+) as cofactor.

Its subcellular location is the cytoplasm. The catalysed reaction is tRNA(Thr) + L-threonine + ATP = L-threonyl-tRNA(Thr) + AMP + diphosphate + H(+). In terms of biological role, catalyzes the attachment of threonine to tRNA(Thr) in a two-step reaction: L-threonine is first activated by ATP to form Thr-AMP and then transferred to the acceptor end of tRNA(Thr). Also edits incorrectly charged L-seryl-tRNA(Thr). The chain is Threonine--tRNA ligase from Janthinobacterium sp. (strain Marseille) (Minibacterium massiliensis).